The following is a 199-amino-acid chain: KGYVFKIMGGCDKQGFPMKQGVLTPGRVRLLLYRGTPCFRGYGRRNGERRRKSVRGCIVSPDLSVLNLVIVKKGENDLPGLTDTEKPRMRGPREPQRSEALYFKEDDVRKYVNTTAEFTTKWKGSKAPKIQRLVTPLTLQRKRARIADKKKRIAKAKSEAAEYQKLLASRLKEQREKRSESLAKKRSRLSAASKPSIAA.

A compositionally biased stretch (basic and acidic residues) spans Lys-172–Ala-183. The interval Lys-172–Ala-199 is disordered.

It belongs to the eukaryotic ribosomal protein eS6 family. Post-translationally, ribosomal protein S6 is the major substrate of protein kinases in eukaryote ribosomes.

In terms of biological role, component of the 40S small ribosomal subunit. Plays an important role in controlling cell growth and proliferation through the selective translation of particular classes of mRNA. The polypeptide is Small ribosomal subunit protein eS6 (RPS6) (Nicotiana tabacum (Common tobacco)).